Consider the following 565-residue polypeptide: MDLAKQISVVDSSLQDVTRNITRPLANFHPNVWGDRFLLNNSDQVQLKMNALDKEEAIEKLKEGVRRKLKEASNDYMRLIQMVDAIQRLGFAYHFEEEIDQALQCLFERHHEYCKDNHDLYANSLSFRLLRQQGYRVSCEIFEKFKDVKGNFMLPNNGEVMGVLEFYEATHLRVHGEDLLDHDFVLSREYLESVLPSLTNPLAEQVDHALHQHSNRRGLSRLEARHYMPVYEQYASHDQYLLKLAKLDFNMLQSLHKEELSELSRWWKGIDVARNLPYARDRIVETYFWILGVYFEPEYAAARKILVKVQSLFSIIDDTFDAYGTFEELQIFTQALERWSISCLDQLPDYMKLIYKTVLEVYDEIEEEMIKQGTSYRTAYGIEAIKSLTRNYFMEAEWREKKYTPTTDEHMRLALKTCGYTSLIIISFLGMGEVVKREAFDWVLSEPDFVKASLTINRLVDDIVGHEDEQKRNHVVSSVECYVQESKTSREDAVYELNSRVESTWKDLNEGFLKPTKFPSPLLYRVLNYSRVIEVMYTKGDWYTNVGPEMQDYIRQLLIDPVNVE.

Mg(2+) contacts are provided by D317, D321, D461, and E469. The short motif at 317 to 321 is the DDXXD motif element; the sequence is DDTFD.

The protein belongs to the terpene synthase family. The cofactor is Mg(2+).

It carries out the reaction (2E,6E)-farnesyl diphosphate = bicyclogermacrene + diphosphate. It participates in secondary metabolite biosynthesis; terpenoid biosynthesis. Its function is as follows. Sesquiterpene synthase converting farnesyl diphosphate to bicyclogermacrene as the major product. The protein is Bicyclogermacrene synthase of Phyla dulcis (Aztec sweet herb).